The primary structure comprises 499 residues: Probable cytosol aminopeptidase (499 aa).

2 residues coordinate Mn(2+): Lys-263 and Asp-268. Lys-275 is a catalytic residue. Asp-286, Asp-345, and Glu-347 together coordinate Mn(2+). Residue Arg-349 is part of the active site.

The protein belongs to the peptidase M17 family. Mn(2+) is required as a cofactor.

The protein resides in the cytoplasm. The enzyme catalyses Release of an N-terminal amino acid, Xaa-|-Yaa-, in which Xaa is preferably Leu, but may be other amino acids including Pro although not Arg or Lys, and Yaa may be Pro. Amino acid amides and methyl esters are also readily hydrolyzed, but rates on arylamides are exceedingly low.. It catalyses the reaction Release of an N-terminal amino acid, preferentially leucine, but not glutamic or aspartic acids.. Functionally, presumably involved in the processing and regular turnover of intracellular proteins. Catalyzes the removal of unsubstituted N-terminal amino acids from various peptides. This is Probable cytosol aminopeptidase from Chlamydia caviae (strain ATCC VR-813 / DSM 19441 / 03DC25 / GPIC) (Chlamydophila caviae).